Reading from the N-terminus, the 401-residue chain is MQKRLTLLGSTGSIGDSTLDVVARHPDRFFVYALTAHRNGDKLVEQCLRFQPEVAVVGDADTAAKVAAKLRAAGCKTAVAYGPQALVDVSKSDGCDTVVAAIVGAAGLEPSLAAARAGKRILLANKEALVMSGSIFMDAVHDNGAILLPVDSEHNAIFQCLPRESALHGGVSKIILTASGGPFRTREPASLVDVTPDEACKHPNWVMGRKISVDSATMMNKGLEVIEAHWLFNLPGDRIDVLIHPQSVIHSLVSYADGSVLAQLGNPDMRTPIAHALAFPDRVDSGVGQLDLAQIAQLSFEKPDYTRFPCLALAMKALAEGGVASAALNAANEIAVEAFLTRRIGFMAIAQVVDAVLNSLPNREATSLADVVDADAAARRAAHAYIDGLPAGARLTERAVQ.

NADPH is bound by residues T11, G12, S13, I14, R38, N39, and N125. K126 serves as a coordination point for 1-deoxy-D-xylulose 5-phosphate. E127 provides a ligand contact to NADPH. D151 serves as a coordination point for Mn(2+). 4 residues coordinate 1-deoxy-D-xylulose 5-phosphate: S152, E153, S179, and H202. E153 lines the Mn(2+) pocket. An NADPH-binding site is contributed by G208. 1-deoxy-D-xylulose 5-phosphate contacts are provided by S215, N220, K221, and E224. E224 contacts Mn(2+).

This sequence belongs to the DXR family. Requires Mg(2+) as cofactor. The cofactor is Mn(2+).

The catalysed reaction is 2-C-methyl-D-erythritol 4-phosphate + NADP(+) = 1-deoxy-D-xylulose 5-phosphate + NADPH + H(+). Its pathway is isoprenoid biosynthesis; isopentenyl diphosphate biosynthesis via DXP pathway; isopentenyl diphosphate from 1-deoxy-D-xylulose 5-phosphate: step 1/6. Catalyzes the NADPH-dependent rearrangement and reduction of 1-deoxy-D-xylulose-5-phosphate (DXP) to 2-C-methyl-D-erythritol 4-phosphate (MEP). The polypeptide is 1-deoxy-D-xylulose 5-phosphate reductoisomerase (Paraburkholderia phymatum (strain DSM 17167 / CIP 108236 / LMG 21445 / STM815) (Burkholderia phymatum)).